We begin with the raw amino-acid sequence, 238 residues long: Ribonuclease PH (238 aa).

Phosphate is bound by residues Arg86 and 124–126 (GTR).

Belongs to the RNase PH family. In terms of assembly, homohexameric ring arranged as a trimer of dimers.

The enzyme catalyses tRNA(n+1) + phosphate = tRNA(n) + a ribonucleoside 5'-diphosphate. In terms of biological role, phosphorolytic 3'-5' exoribonuclease that plays an important role in tRNA 3'-end maturation. Removes nucleotide residues following the 3'-CCA terminus of tRNAs; can also add nucleotides to the ends of RNA molecules by using nucleoside diphosphates as substrates, but this may not be physiologically important. Probably plays a role in initiation of 16S rRNA degradation (leading to ribosome degradation) during starvation. The protein is Ribonuclease PH of Brucella melitensis biotype 2 (strain ATCC 23457).